The following is a 248-amino-acid chain: 3-oxoacyl-[acyl-carrier-protein] reductase FabG (248 aa).

NADP(+) is bound by residues 14–17, 64–65, and Asn91; these read GGSR and DV. Substrate is bound at residue Ser143. Tyr156 acts as the Proton acceptor in catalysis. Residues 156–160 and Ile189 contribute to the NADP(+) site; that span reads YAAAK.

The protein belongs to the short-chain dehydrogenases/reductases (SDR) family. Homotetramer.

It catalyses the reaction a (3R)-hydroxyacyl-[ACP] + NADP(+) = a 3-oxoacyl-[ACP] + NADPH + H(+). It functions in the pathway lipid metabolism; fatty acid biosynthesis. Its function is as follows. Catalyzes the NADPH-dependent reduction of beta-ketoacyl-ACP substrates to beta-hydroxyacyl-ACP products, the first reductive step in the elongation cycle of fatty acid biosynthesis. This chain is 3-oxoacyl-[acyl-carrier-protein] reductase FabG (fabG), found in Chlamydia pneumoniae (Chlamydophila pneumoniae).